A 575-amino-acid chain; its full sequence is Glutathione/L-cysteine transport system ATP-binding/permease protein CydD (575 aa).

Helical transmembrane passes span 17–37 (LFVLVIFLGAVTIFSAAFLMF), 53–73 (ILLIYVPIVAVRTFGIARSVS), 135–155 (IFPAISALLLYAVSVIALGFF), 161–181 (ILLALYLFVLVVLFPVVSLLV), 246–266 (FAAQCLVAGLILLMLFWTAGQ), and 275–295 (TMIAAFVLVVFPLTEAFLPLS). The ABC transmembrane type-1 domain occupies 19–303 (VLVIFLGAVT…LSDALGEVPG (285 aa)). In terms of domain architecture, ABC transporter spans 337–570 (LAFRDVTFSY…NERYRRLYHL (234 aa)). 370–377 (GRSGSGKS) provides a ligand contact to ATP.

It belongs to the ABC transporter superfamily. Cysteine exporter (TC 3.A.1.129.1) family. In terms of assembly, forms a heterodimer with CydC.

The protein resides in the cell membrane. It catalyses the reaction L-cysteine(in) + ATP + H2O = L-cysteine(out) + ADP + phosphate + H(+). The catalysed reaction is glutathione(in) + ATP + H2O = glutathione(out) + ADP + phosphate + H(+). In terms of biological role, part of the ABC transporter complex CydDC that exports the reduced low-molecular-weight thiols cysteine and glutathione from the cell. Export of these thiol-containing redox-active molecules may be crucial for redox homeostasis, permitting correct assembly of various respiratory complexes and formation of correct disulfide bonds in secreted proteins. CydD contains transmembrane domains (TMD), which form a pore in the membrane, and an ATP-binding domain (NBD), which is responsible for energy generation. This Bacillus subtilis (strain 168) protein is Glutathione/L-cysteine transport system ATP-binding/permease protein CydD (cydD).